The sequence spans 434 residues: MQATVETISNLERRMTVSVPVQPLESEVNERINRLARTVKMPGFRPGKVPLNIVRQQYGAQVRNEVLSNAVERSFSDAVEQNKLRVAGYPHIEHKPYAENDPQIEYVATFEVFPEVNIGDLSKAKIERPVLEVGEAEVKKTIDVLLRQRATFEPVKRASKKGDKINISLIAYIDDQEVERTDENGLDLIIGEGGRFPAFESELSGNKAGSNKVFEIAYPEDHKPEQLAGKTVRYDVTFNTVEQAKLPEFDADFARSLGVEDGDVEKMREEITASLKQEVEKRIRVKLKEQAFQALLDNTALEVPKAFINAEVGRLIQSTQDNLKQRGVDLANVNLEPALFEEQATRNASLRLILSELVNRENLQANAEQVRNMVNVFAQSFERPDDVVTWYYADTKRLDEPAALATEDNVVEWVLKSANVVDKKVKFDDLMGNS.

In terms of domain architecture, PPIase FKBP-type spans 162–247 (GDKINISLIA…FNTVEQAKLP (86 aa)).

The protein belongs to the FKBP-type PPIase family. Tig subfamily.

It is found in the cytoplasm. The catalysed reaction is [protein]-peptidylproline (omega=180) = [protein]-peptidylproline (omega=0). Involved in protein export. Acts as a chaperone by maintaining the newly synthesized protein in an open conformation. Functions as a peptidyl-prolyl cis-trans isomerase. This Methylobacillus flagellatus (strain ATCC 51484 / DSM 6875 / VKM B-1610 / KT) protein is Trigger factor.